Here is a 511-residue protein sequence, read N- to C-terminus: Glutamyl-tRNA(Gln) amidotransferase subunit B, mitochondrial (511 aa).

Residues 1–6 constitute a mitochondrion transit peptide; the sequence is MLRRYL.

Belongs to the GatB/GatE family. GatB subfamily. In terms of assembly, subunit of the heterotrimeric GatFAB amidotransferase (AdT) complex, composed of A, B and F subunits.

The protein resides in the mitochondrion. It catalyses the reaction L-glutamyl-tRNA(Gln) + L-glutamine + ATP + H2O = L-glutaminyl-tRNA(Gln) + L-glutamate + ADP + phosphate + H(+). Allows the formation of correctly charged Gln-tRNA(Gln) through the transamidation of misacylated Glu-tRNA(Gln) in the mitochondria. The reaction takes place in the presence of glutamine and ATP through an activated gamma-phospho-Glu-tRNA(Gln). The sequence is that of Glutamyl-tRNA(Gln) amidotransferase subunit B, mitochondrial from Lodderomyces elongisporus (strain ATCC 11503 / CBS 2605 / JCM 1781 / NBRC 1676 / NRRL YB-4239) (Yeast).